A 219-amino-acid chain; its full sequence is Octanoyltransferase (219 aa).

In terms of domain architecture, BPL/LPL catalytic spans 32–207; that stretch reads ENSQDEIWIV…TLSQELGLDK (176 aa). Residues 71-78, 138-140, and 151-153 each bind substrate; these read RGGQVTYH, SLG, and GLA. The Acyl-thioester intermediate role is filled by Cys169.

Belongs to the LipB family.

Its subcellular location is the cytoplasm. The enzyme catalyses octanoyl-[ACP] + L-lysyl-[protein] = N(6)-octanoyl-L-lysyl-[protein] + holo-[ACP] + H(+). Its pathway is protein modification; protein lipoylation via endogenous pathway; protein N(6)-(lipoyl)lysine from octanoyl-[acyl-carrier-protein]: step 1/2. Functionally, catalyzes the transfer of endogenously produced octanoic acid from octanoyl-acyl-carrier-protein onto the lipoyl domains of lipoate-dependent enzymes. Lipoyl-ACP can also act as a substrate although octanoyl-ACP is likely to be the physiological substrate. This chain is Octanoyltransferase, found in Shewanella halifaxensis (strain HAW-EB4).